We begin with the raw amino-acid sequence, 315 residues long: GTP cyclohydrolase MptA (315 aa).

It belongs to the GTP cyclohydrolase IV family. As to quaternary structure, homodimer. Fe(2+) serves as cofactor.

The catalysed reaction is GTP + H2O = 7,8-dihydroneopterin 2',3'-cyclic phosphate + formate + diphosphate + H(+). It functions in the pathway cofactor biosynthesis; 5,6,7,8-tetrahydromethanopterin biosynthesis. In terms of biological role, converts GTP to 7,8-dihydro-D-neopterin 2',3'-cyclic phosphate, the first intermediate in the biosynthesis of coenzyme methanopterin. This is GTP cyclohydrolase MptA from Methanococcus maripaludis (strain C7 / ATCC BAA-1331).